We begin with the raw amino-acid sequence, 92 residues long: Long neurotoxin 3FTx-Oxy2 (92 aa).

The signal sequence occupies residues 1–21 (MKTLLLTLVVVTIVCLDLGYT). Intrachain disulfides connect Cys24–Cys42, Cys35–Cys63, Cys67–Cys79, and Cys80–Cys85.

Belongs to the three-finger toxin family. Long-chain subfamily. Type II alpha-neurotoxin sub-subfamily. In terms of tissue distribution, expressed by the venom gland.

The protein resides in the secreted. In terms of biological role, binds with high affinity to muscular (alpha-1/CHRNA1) and neuronal (alpha-7/CHRNA7) nicotinic acetylcholine receptor (nAChR) and inhibits acetylcholine from binding to the receptor, thereby impairing neuromuscular and neuronal transmission. The sequence is that of Long neurotoxin 3FTx-Oxy2 from Oxyuranus microlepidotus (Inland taipan).